The following is a 326-amino-acid chain: Phenylserine dehydratase (326 aa).

As to quaternary structure, monomer. It depends on pyridoxal 5'-phosphate as a cofactor.

The catalysed reaction is L-threo-3-phenylserine = 3-phenylpyruvate + NH4(+). Its activity is regulated as follows. Inhibited by phenylhydrazine, hydroxylamine, p-chloromercuribenzoate, and HgCl(2). The chain is Phenylserine dehydratase from Ralstonia pickettii (Burkholderia pickettii).